A 99-amino-acid chain; its full sequence is DNA-binding protein HU (99 aa).

The segment at 63–82 (HRKEREGRNPKTGAKMKIDA) is disordered.

This sequence belongs to the bacterial histone-like protein family. In terms of assembly, homodimer.

Its function is as follows. Histone-like DNA-binding protein which is capable of wrapping DNA to stabilize it, and thus to prevent its denaturation under extreme environmental conditions. The protein is DNA-binding protein HU (hup) of Rickettsia prowazekii (strain Madrid E).